The chain runs to 190 residues: MAAIKPITTYKGKIVPLFNDNIDTDQIIPKVHLKRISKSGFGPFAFDEWRYLPDGSDNPDFNPNKPQYKGASILITGDNFGCGSSREHAAWALKDYGFHIIIAGSFSDIFYMNCTKNAMLPIVLEKSAREHLAQYEEIEIDLPNQTVSSPDKRFHFEIDETWKNKLVNGLDDIAITLQYESLIEKYEKSL.

It belongs to the LeuD family. LeuD type 1 subfamily. In terms of assembly, heterodimer of LeuC and LeuD.

It carries out the reaction (2R,3S)-3-isopropylmalate = (2S)-2-isopropylmalate. The protein operates within amino-acid biosynthesis; L-leucine biosynthesis; L-leucine from 3-methyl-2-oxobutanoate: step 2/4. In terms of biological role, catalyzes the isomerization between 2-isopropylmalate and 3-isopropylmalate, via the formation of 2-isopropylmaleate. The protein is 3-isopropylmalate dehydratase small subunit of Staphylococcus aureus (strain JH1).